A 359-amino-acid polypeptide reads, in one-letter code: Peptide chain release factor 1 (359 aa).

At glutamine 234 the chain carries N5-methylglutamine. Residues serine 283–arginine 305 form a disordered region.

The protein belongs to the prokaryotic/mitochondrial release factor family. In terms of processing, methylated by PrmC. Methylation increases the termination efficiency of RF1.

The protein localises to the cytoplasm. Peptide chain release factor 1 directs the termination of translation in response to the peptide chain termination codons UAG and UAA. The chain is Peptide chain release factor 1 from Methylobacterium sp. (strain 4-46).